A 274-amino-acid chain; its full sequence is Triosephosphate isomerase (274 aa).

31 to 33 is a binding site for substrate; sequence NWK. The active-site Electrophile is H118. E188 serves as the catalytic Proton acceptor. Residues G194, S234, and 255–256 each bind substrate; that span reads GG.

It belongs to the triosephosphate isomerase family. As to quaternary structure, homodimer.

The protein resides in the cytoplasm. The enzyme catalyses D-glyceraldehyde 3-phosphate = dihydroxyacetone phosphate. Its pathway is carbohydrate biosynthesis; gluconeogenesis. It functions in the pathway carbohydrate degradation; glycolysis; D-glyceraldehyde 3-phosphate from glycerone phosphate: step 1/1. Its function is as follows. Involved in the gluconeogenesis. Catalyzes stereospecifically the conversion of dihydroxyacetone phosphate (DHAP) to D-glyceraldehyde-3-phosphate (G3P). This Chlamydia trachomatis serovar A (strain ATCC VR-571B / DSM 19440 / HAR-13) protein is Triosephosphate isomerase.